The chain runs to 394 residues: MTSIQQRDAQSVLAAIDNLLPEIRDRAQATEDLRRLPDETVKALDDVGFFTLLQPQQWGGLQCDPALFFEATRRLASVCGSTGWVSSIVGVHNWHLALFDQRAQEEVWGEDPSTRISSSYAPMGAGVVVDGGYLVNGSWNWSSGCDHASWTFVGGPVIKDGRPVDFGSFLIPRSEYEIKDVWYVVGLRGTGSNTLVVKDVFVPRHRFLSYKAMNDHTAGGLATNSAPVYKMPWGTMHPTTISAPIVGMAYGAYAAHVEHQGKRVRAAFAGEKAKDDPFAKVRIAEAASDIDAAWRQLIGNVSDEYALLAAGKEIPFELRARARRDQVRATGRSIASIDRLFEASGATALSNEAPIQRFWRDAHAGRVHAANDPERAYVIFGNHEFGLPPGDTMV.

Residues Trp-84, 118-120 (SSY), 141-143 (WSS), Arg-263, 346-347 (AT), and 368-369 (HA) each bind FMN.

The protein belongs to the HpaH/HsaA monooxygenase family. As to quaternary structure, homotetramer under anaerobic conditions. HsaAB monooxygenase consists of an oxygenase component HsaA and a reductase component HsaB.

It catalyses the reaction 3-hydroxy-9,10-secoandrosta-1,3,5(10)-triene-9,17-dione + FMNH2 + O2 = 3,4-dihydroxy-9,10-secoandrosta-1,3,5(10)-triene-9,17-dione + FMN + H2O + H(+). Its pathway is lipid metabolism; steroid biosynthesis. Its function is as follows. Catalyzes the o-hydroxylation of 3-hydroxy-9,10-secoandrosta-1,3,5(10)-triene-9,17-dione (3-HSA) to 3,4-dihydroxy-9,10-secoandrosta-1,3,5(10)-triene-9,17-dione (3,4-DHSA) in the catabolism of cholesterol. This Mycobacterium tuberculosis (strain CDC 1551 / Oshkosh) protein is Flavin-dependent monooxygenase, oxygenase subunit HsaA.